Consider the following 526-residue polypeptide: Cytochrome P450 52A5 (526 aa).

Residues 18 to 38 (WYVIVPLAIIIYKVFDYFYVL) form a helical membrane-spanning segment. Cys473 is a binding site for heme.

The protein belongs to the cytochrome P450 family. The cofactor is heme.

The protein resides in the membrane. In terms of biological role, together with an NADPH cytochrome P450 the enzyme system catalyzes the terminal hydroxylation as the first step in the assimilation of alkanes and fatty acids. This Candida maltosa (Yeast) protein is Cytochrome P450 52A5 (CYP52A5).